The chain runs to 323 residues: Ubiquinone biosynthesis protein COQ4, mitochondrial (323 aa).

Residues histidine 209, aspartate 210, histidine 213, and glutamate 225 each contribute to the Zn(2+) site.

The protein belongs to the COQ4 family. Component of a multi-subunit COQ enzyme complex, composed of at least COQ3, COQ4, COQ5, COQ6, COQ7 and COQ9. The cofactor is Zn(2+).

The protein resides in the mitochondrion inner membrane. It carries out the reaction a 4-hydroxy-3-methoxy-5-(all-trans-polyprenyl)benzoate + H(+) = a 2-methoxy-6-(all-trans-polyprenyl)phenol + CO2. It participates in cofactor biosynthesis; ubiquinone biosynthesis. Lyase that catalyzes the C1-decarboxylation of 4-hydroxy-3-methoxy-5-(all-trans-polyprenyl)benzoic acid into 2-methoxy-6-(all-trans-polyprenyl)phenol during ubiquinone biosynthesis. The chain is Ubiquinone biosynthesis protein COQ4, mitochondrial from Debaryomyces hansenii (strain ATCC 36239 / CBS 767 / BCRC 21394 / JCM 1990 / NBRC 0083 / IGC 2968) (Yeast).